The sequence spans 265 residues: Secreted RxLR effector protein 146 (265 aa).

A signal peptide spans 1 to 25 (MRYYTQVVAASLVATLAVVDSIVFA). The short motif at 32 to 50 (RFLRQDGATVTRGGKGEER) is the RxLR-dEER element. N-linked (GlcNAc...) asparagine glycosylation is found at asparagine 71 and asparagine 148.

The protein belongs to the RxLR effector family.

The protein localises to the secreted. It localises to the host nucleus. The protein resides in the host cytoplasm. In terms of biological role, secreted effector that completely suppresses the host cell death induced by cell death-inducing proteins. This chain is Secreted RxLR effector protein 146, found in Plasmopara viticola (Downy mildew of grapevine).